We begin with the raw amino-acid sequence, 475 residues long: Alpha,alpha-trehalose-phosphate synthase [UDP-forming] (475 aa).

D-glucose 6-phosphate contacts are provided by Tyr-93 and Asp-147. Residues Arg-285 and Lys-290 each coordinate UDP. UDP-alpha-D-glucose contacts are provided by Arg-285 and Lys-290. Residue Arg-323 coordinates D-glucose 6-phosphate. Residue Asp-384–Glu-392 coordinates UDP-alpha-D-glucose. Residue Leu-388–Glu-392 coordinates UDP.

Belongs to the glycosyltransferase 20 family.

It carries out the reaction D-glucose 6-phosphate + UDP-alpha-D-glucose = alpha,alpha-trehalose 6-phosphate + UDP + H(+). The protein operates within carbohydrate biosynthesis. In terms of biological role, synthase catalytic subunit of the trehalose synthase complex that catalyzes the production of trehalose from glucose-6-phosphate and UDP-alpha-D-glucose in a two step process. The sequence is that of Alpha,alpha-trehalose-phosphate synthase [UDP-forming] from Pichia angusta (Yeast).